A 267-amino-acid chain; its full sequence is Eukaryotic translation initiation factor 3 subunit J (267 aa).

Residues 1-70 (MSWNDDDVFA…KDKKSSTDQV (70 aa)) form a disordered region. The span at 24–38 (WDAEEPIMESWDAEE) shows a compositional bias: acidic residues. Residues 39–66 (TPAKKETSPKPDSKKNAKKDSKKDKKSS) are compositionally biased toward basic and acidic residues. Positions 192–220 (IESIRQSIATLNVLMKDKEREERRARLAK) form a coiled coil.

Belongs to the eIF-3 subunit J family. In terms of assembly, component of the eukaryotic translation initiation factor 3 (eIF-3) complex.

It localises to the cytoplasm. Its function is as follows. Component of the eukaryotic translation initiation factor 3 (eIF-3) complex, which is involved in protein synthesis of a specialized repertoire of mRNAs and, together with other initiation factors, stimulates binding of mRNA and methionyl-tRNAi to the 40S ribosome. The eIF-3 complex specifically targets and initiates translation of a subset of mRNAs involved in cell proliferation. In Vanderwaltozyma polyspora (strain ATCC 22028 / DSM 70294 / BCRC 21397 / CBS 2163 / NBRC 10782 / NRRL Y-8283 / UCD 57-17) (Kluyveromyces polysporus), this protein is Eukaryotic translation initiation factor 3 subunit J.